We begin with the raw amino-acid sequence, 1333 residues long: Xanthine dehydrogenase/oxidase (1333 aa).

Residues 4-91 enclose the 2Fe-2S ferredoxin-type domain; it reads DKLVFFVNGR…HVAVTTVEGI (88 aa). Cys-43, Cys-48, Cys-51, Cys-73, Cys-113, Cys-116, Cys-148, and Cys-150 together coordinate [2Fe-2S] cluster. Residues 229–414 form the FAD-binding PCMH-type domain; sequence FEGERVTWIQ…LSIEIPYSRE (186 aa). Residues 257-264, Phe-337, 347-351, Asp-360, Leu-404, and Lys-422 contribute to the FAD site; these read LVVGNTEI and SVGGN. Intrachain disulfides connect Cys-509–Cys-1318 and Cys-536–Cys-993. The Mo-molybdopterin site is built by Gln-768 and Phe-799. 2 residues coordinate substrate: Glu-803 and Arg-881. Residue Arg-913 participates in Mo-molybdopterin binding. The substrate site is built by Phe-915 and Thr-1011. Ala-1080 serves as a coordination point for Mo-molybdopterin. Residue Glu-1262 is the Proton acceptor of the active site.

Belongs to the xanthine dehydrogenase family. As to quaternary structure, homodimer. Interacts with BTN1A1. Requires [2Fe-2S] cluster as cofactor. FAD serves as cofactor. It depends on Mo-molybdopterin as a cofactor. In terms of processing, subject to partial proteolysis; this alters the enzyme from the dehydrogenase form (D) to the oxidase form (O). Contains sulfhydryl groups that are easily oxidized (in vitro); this alters the enzyme from the dehydrogenase form (D) to the oxidase form (O). In terms of tissue distribution, detected in milk (at protein level).

It localises to the cytoplasm. It is found in the peroxisome. The protein resides in the secreted. The enzyme catalyses xanthine + NAD(+) + H2O = urate + NADH + H(+). It catalyses the reaction hypoxanthine + NAD(+) + H2O = xanthine + NADH + H(+). The catalysed reaction is xanthine + O2 + H2O = urate + H2O2. Can be converted from the dehydrogenase form (D) to the oxidase form (O) irreversibly by proteolysis or reversibly through the oxidation of sulfhydryl groups. Its function is as follows. Key enzyme in purine degradation. Catalyzes the oxidation of hypoxanthine to xanthine. Catalyzes the oxidation of xanthine to uric acid. Contributes to the generation of reactive oxygen species. Has also low oxidase activity towards aldehydes (in vitro). This chain is Xanthine dehydrogenase/oxidase (XDH), found in Homo sapiens (Human).